A 127-amino-acid polypeptide reads, in one-letter code: Fluoride-specific ion channel FluC (127 aa).

A run of 4 helical transmembrane segments spans residues 3-23 (ALLL…LLGV), 36-56 (GTFA…GGLA), 72-92 (VGAL…ALMI), and 101-121 (FAYS…GLLL). Na(+) is bound by residues Gly76 and Thr79.

Belongs to the fluoride channel Fluc/FEX (TC 1.A.43) family.

It is found in the cell inner membrane. The catalysed reaction is fluoride(in) = fluoride(out). Na(+) is not transported, but it plays an essential structural role and its presence is essential for fluoride channel function. In terms of biological role, fluoride-specific ion channel. Important for reducing fluoride concentration in the cell, thus reducing its toxicity. This Phenylobacterium zucineum (strain HLK1) protein is Fluoride-specific ion channel FluC.